Here is a 626-residue protein sequence, read N- to C-terminus: Lipid-A-disaccharide synthase (626 aa).

Residues 1-225 (MLPLYLVHVL…YKKSRLPKFH (225 aa)) form a unknown region. Residues 226-626 (SPSCFLSAGE…KEFHPKSSRA (401 aa)) are lipid-A-disaccharide synthase.

It in the C-terminal section; belongs to the LpxB family.

It catalyses the reaction a lipid X + a UDP-2-N,3-O-bis[(3R)-3-hydroxyacyl]-alpha-D-glucosamine = a lipid A disaccharide + UDP + H(+). Its pathway is bacterial outer membrane biogenesis; LPS lipid A biosynthesis. Condensation of UDP-2,3-diacylglucosamine and 2,3-diacylglucosamine-1-phosphate to form lipid A disaccharide, a precursor of lipid A, a phosphorylated glycolipid that anchors the lipopolysaccharide to the outer membrane of the cell. In Chlamydia caviae (strain ATCC VR-813 / DSM 19441 / 03DC25 / GPIC) (Chlamydophila caviae), this protein is Lipid-A-disaccharide synthase (lpxB).